Consider the following 525-residue polypeptide: GMP synthase [glutamine-hydrolyzing] (525 aa).

The region spanning 9–207 (RILILDFGSQ…VRDICQCEAL (199 aa)) is the Glutamine amidotransferase type-1 domain. The active-site Nucleophile is the cysteine 86. Active-site residues include histidine 181 and glutamate 183. The region spanning 208-400 (WTPAKIIDDA…LGLPYDMLYR (193 aa)) is the GMPS ATP-PPase domain. 235–241 (SGGVDSS) lines the ATP pocket.

Homodimer.

The enzyme catalyses XMP + L-glutamine + ATP + H2O = GMP + L-glutamate + AMP + diphosphate + 2 H(+). Its pathway is purine metabolism; GMP biosynthesis; GMP from XMP (L-Gln route): step 1/1. Catalyzes the synthesis of GMP from XMP. In Escherichia coli O139:H28 (strain E24377A / ETEC), this protein is GMP synthase [glutamine-hydrolyzing].